Here is a 206-residue protein sequence, read N- to C-terminus: Small ribosomal subunit protein uS4 (206 aa).

Positions 94–157 (RRLDNVVYRL…RRRTYFKNLI (64 aa)) constitute an S4 RNA-binding domain.

Belongs to the universal ribosomal protein uS4 family. Part of the 30S ribosomal subunit. Contacts protein S5. The interaction surface between S4 and S5 is involved in control of translational fidelity.

One of the primary rRNA binding proteins, it binds directly to 16S rRNA where it nucleates assembly of the body of the 30S subunit. Functionally, with S5 and S12 plays an important role in translational accuracy. This Roseiflexus sp. (strain RS-1) protein is Small ribosomal subunit protein uS4.